We begin with the raw amino-acid sequence, 1252 residues long: ATP-dependent helicase/nuclease subunit A (1252 aa).

The UvrD-like helicase ATP-binding domain maps to 6-489; the sequence is TNWTEEQKEA…VLLYKNFRSR (484 aa). 27–34 contributes to the ATP binding site; the sequence is AAAGSGKT. The region spanning 523–811 is the UvrD-like helicase C-terminal domain; that stretch reads ANYEEIEENL…RIMSIHKSKG (289 aa).

Belongs to the helicase family. AddA subfamily. Heterodimer of AddA and AddB/RexB. The cofactor is Mg(2+).

It catalyses the reaction Couples ATP hydrolysis with the unwinding of duplex DNA by translocating in the 3'-5' direction.. It carries out the reaction ATP + H2O = ADP + phosphate + H(+). The heterodimer acts as both an ATP-dependent DNA helicase and an ATP-dependent, dual-direction single-stranded exonuclease. Recognizes the chi site generating a DNA molecule suitable for the initiation of homologous recombination. The AddA nuclease domain is required for chi fragment generation; this subunit has the helicase and 3' -&gt; 5' nuclease activities. This is ATP-dependent helicase/nuclease subunit A from Clostridium acetobutylicum (strain ATCC 824 / DSM 792 / JCM 1419 / IAM 19013 / LMG 5710 / NBRC 13948 / NRRL B-527 / VKM B-1787 / 2291 / W).